Here is a 270-residue protein sequence, read N- to C-terminus: 3-methyl-2-oxobutanoate hydroxymethyltransferase (270 aa).

Residues Asp-43 and Asp-82 each contribute to the Mg(2+) site. 3-methyl-2-oxobutanoate is bound by residues 43-44 (DS), Asp-82, and Lys-112. Position 114 (Glu-114) interacts with Mg(2+). The Proton acceptor role is filled by Glu-179.

This sequence belongs to the PanB family. As to quaternary structure, homodecamer; pentamer of dimers. The cofactor is Mg(2+).

Its subcellular location is the cytoplasm. It carries out the reaction 3-methyl-2-oxobutanoate + (6R)-5,10-methylene-5,6,7,8-tetrahydrofolate + H2O = 2-dehydropantoate + (6S)-5,6,7,8-tetrahydrofolate. Its pathway is cofactor biosynthesis; (R)-pantothenate biosynthesis; (R)-pantoate from 3-methyl-2-oxobutanoate: step 1/2. Its function is as follows. Catalyzes the reversible reaction in which hydroxymethyl group from 5,10-methylenetetrahydrofolate is transferred onto alpha-ketoisovalerate to form ketopantoate. This Staphylococcus carnosus (strain TM300) protein is 3-methyl-2-oxobutanoate hydroxymethyltransferase.